The sequence spans 404 residues: Inosine-5'-monophosphate dehydrogenase (404 aa).

Residues Asp172 and 222 to 224 (GIG) contribute to the NAD(+) site. K(+)-binding residues include Gly224 and Gly226. Position 227 (Ser227) interacts with IMP. K(+) is bound at residue Cys229. The Thioimidate intermediate role is filled by Cys229. IMP is bound by residues 262–264 (DGG), 285–286 (GN), and 309–313 (YVGMG). Residue Arg325 is the Proton acceptor of the active site. Glu340 serves as a coordination point for IMP. K(+) contacts are provided by Glu394, Ser395, and His396.

It belongs to the IMPDH/GMPR family. Homotetramer. K(+) is required as a cofactor.

The enzyme catalyses IMP + NAD(+) + H2O = XMP + NADH + H(+). It participates in purine metabolism; XMP biosynthesis via de novo pathway; XMP from IMP: step 1/1. Its activity is regulated as follows. Mycophenolic acid (MPA) is a non-competitive inhibitor that prevents formation of the closed enzyme conformation by binding to the same site as the amobile flap. In contrast, mizoribine monophosphate (MZP) is a competitive inhibitor that induces the closed conformation. MPA is a potent inhibitor of mammalian IMPDHs but a poor inhibitor of the bacterial enzymes. MZP is a more potent inhibitor of bacterial IMPDH. Functionally, catalyzes the conversion of inosine 5'-phosphate (IMP) to xanthosine 5'-phosphate (XMP), the first committed and rate-limiting step in the de novo synthesis of guanine nucleotides, and therefore plays an important role in the regulation of cell growth. Essential for mouse infection by tick bite and critical for the survival in environments that appear to lack sufficient amounts of guanine, guanosine, and/or deoxyguanosine to support spirochete growth, such as mammalian host tissues. The sequence is that of Inosine-5'-monophosphate dehydrogenase from Borreliella burgdorferi (strain ATCC 35210 / DSM 4680 / CIP 102532 / B31) (Borrelia burgdorferi).